The primary structure comprises 268 residues: Protein MGF 300-1L (268 aa).

Residues 1–175 (MVSLTTCCLK…QTFKIFYAKN (175 aa)) lie on the Cytoplasmic side of the membrane. Residues 176–193 (YSLSTLYCIFLAIYYKRY) traverse the membrane as a helical segment. Residues 194 to 268 (TALRKMVKIY…MYAFSQNNFW (75 aa)) lie on the Extracellular side of the membrane.

The protein belongs to the asfivirus MGF 300 family.

Its subcellular location is the host membrane. Functionally, plays a role in virus cell tropism, and may be required for efficient virus replication in macrophages. The polypeptide is Protein MGF 300-1L (African swine fever virus (isolate Tick/South Africa/Pretoriuskop Pr4/1996) (ASFV)).